A 154-amino-acid chain; its full sequence is Nucleoside diphosphate kinase (154 aa).

Residues Lys-12, Phe-60, Arg-88, Thr-94, Arg-105, and Asn-115 each coordinate ATP. His-118 serves as the catalytic Pros-phosphohistidine intermediate.

The protein belongs to the NDK family. Mg(2+) is required as a cofactor.

The protein localises to the cytoplasm. The enzyme catalyses a 2'-deoxyribonucleoside 5'-diphosphate + ATP = a 2'-deoxyribonucleoside 5'-triphosphate + ADP. It carries out the reaction a ribonucleoside 5'-diphosphate + ATP = a ribonucleoside 5'-triphosphate + ADP. Major role in the synthesis of nucleoside triphosphates other than ATP. The ATP gamma phosphate is transferred to the NDP beta phosphate via a ping-pong mechanism, using a phosphorylated active-site intermediate. This is Nucleoside diphosphate kinase from Haloarcula marismortui (strain ATCC 43049 / DSM 3752 / JCM 8966 / VKM B-1809) (Halobacterium marismortui).